Reading from the N-terminus, the 565-residue chain is NAD-dependent malic enzyme (565 aa).

The active-site Proton donor is the tyrosine 104. Arginine 157 provides a ligand contact to NAD(+). The Proton acceptor role is filled by lysine 175. Residues glutamate 246, aspartate 247, and aspartate 270 each coordinate a divalent metal cation. The NAD(+) site is built by aspartate 270 and asparagine 418.

The protein belongs to the malic enzymes family. In terms of assembly, homotetramer. Requires Mg(2+) as cofactor. It depends on Mn(2+) as a cofactor.

The catalysed reaction is (S)-malate + NAD(+) = pyruvate + CO2 + NADH. The enzyme catalyses oxaloacetate + H(+) = pyruvate + CO2. The sequence is that of NAD-dependent malic enzyme from Yersinia enterocolitica serotype O:8 / biotype 1B (strain NCTC 13174 / 8081).